The primary structure comprises 186 residues: UPF0398 protein BPUM_1952 (186 aa).

Belongs to the UPF0398 family.

This is UPF0398 protein BPUM_1952 from Bacillus pumilus (strain SAFR-032).